The chain runs to 218 residues: Pyridoxine/pyridoxamine 5'-phosphate oxidase (218 aa).

Substrate is bound by residues 14–17 and Lys72; that span reads RREY. FMN is bound by residues 67–72, 82–83, Arg88, Lys89, and Gln111; these read RIVLLK and YT. The substrate site is built by Tyr129, Arg133, and Ser137. FMN contacts are provided by residues 146-147 and Trp191; that span reads QS. 197-199 contacts substrate; sequence RLH. Arg201 is an FMN binding site.

It belongs to the pyridoxamine 5'-phosphate oxidase family. Homodimer. FMN serves as cofactor.

It catalyses the reaction pyridoxamine 5'-phosphate + O2 + H2O = pyridoxal 5'-phosphate + H2O2 + NH4(+). The catalysed reaction is pyridoxine 5'-phosphate + O2 = pyridoxal 5'-phosphate + H2O2. It functions in the pathway cofactor metabolism; pyridoxal 5'-phosphate salvage; pyridoxal 5'-phosphate from pyridoxamine 5'-phosphate: step 1/1. It participates in cofactor metabolism; pyridoxal 5'-phosphate salvage; pyridoxal 5'-phosphate from pyridoxine 5'-phosphate: step 1/1. Functionally, catalyzes the oxidation of either pyridoxine 5'-phosphate (PNP) or pyridoxamine 5'-phosphate (PMP) into pyridoxal 5'-phosphate (PLP). The chain is Pyridoxine/pyridoxamine 5'-phosphate oxidase from Citrobacter koseri (strain ATCC BAA-895 / CDC 4225-83 / SGSC4696).